We begin with the raw amino-acid sequence, 372 residues long: Putative 26S proteasome regulatory subunit homolog MTH_1011 (372 aa).

164-171 (GSPGTGKT) serves as a coordination point for ATP.

Belongs to the AAA ATPase family.

In terms of biological role, the 26S proteasome is involved in the ATP-dependent degradation of ubiquitinated proteins. The regulatory (or ATPase) complex confers ATP dependency and substrate specificity to the 26S complex. This is Putative 26S proteasome regulatory subunit homolog MTH_1011 from Methanothermobacter thermautotrophicus (strain ATCC 29096 / DSM 1053 / JCM 10044 / NBRC 100330 / Delta H) (Methanobacterium thermoautotrophicum).